A 178-amino-acid polypeptide reads, in one-letter code: Fatty-acid and retinol-binding protein 1 (178 aa).

A signal peptide spans 1-16; that stretch reads MYHQLILMALIGVIMA. 2 coiled-coil regions span residues 67-89 and 122-154; these read DAAL…ELRN and QKLD…LKAT.

Belongs to the fatty-acid and retinol-binding protein (FARBP) family. Post-translationally, not glycosylated.

Its subcellular location is the secreted. Functionally, binds retinol and different fatty acids. This Litomosoides sigmodontis (Filarial nematode worm) protein is Fatty-acid and retinol-binding protein 1.